The following is a 147-amino-acid chain: Large ribosomal subunit protein uL16 (147 aa).

Belongs to the universal ribosomal protein uL16 family. As to quaternary structure, part of the 50S ribosomal subunit.

Its function is as follows. Binds 23S rRNA and is also seen to make contacts with the A and possibly P site tRNAs. This chain is Large ribosomal subunit protein uL16, found in Clostridium tetani (strain Massachusetts / E88).